The primary structure comprises 158 residues: Osmosensory protein A (158 aa).

Thr-2 is subject to Phosphothreonine; by PknD. The 112-residue stretch at 28–139 (AQIRAYLHHL…RSVHKALHDL (112 aa)) folds into the STAS domain.

This sequence belongs to the anti-sigma-factor antagonist family. As to quaternary structure, interacts with Rv2638. Phosphorylation abolishes binding to Rv2638. Post-translationally, phosphorylated on Thr-2 by the serine/threonine-protein kinase PknD. Also phosphorylated to a lesser extent by PknB and PknE. Dephosphorylated by PstP.

With respect to regulation, regulated by PknD under osmotic stress. Its function is as follows. Part of a signaling pathway that enables adaptation to osmotic stress through cell wall remodeling and virulence factor production. Unphosphorylated OprA forms a complex with the anti-anti-sigma-factor paralog Rv2638 that dissociates on OprA phosphorylation by PknD. Phosphorylation of OprA may stimulate the release of SigF from an inhibitory complex and enable the transcription of osmotically regulated genes, such as oprA and the ESX-1-associated virulence factor espA. This Mycobacterium tuberculosis (strain ATCC 25618 / H37Rv) protein is Osmosensory protein A.